The sequence spans 448 residues: VGFKAGVKDYKLTYYTPDYETKDTDILAAFRVSPQPGVPPEEAGAAVAAESSTGTWTTVWTDGLTSLDRYKGRCYHIEPVAGEENQYIAYVAYPLDLFEEGSVTNMFTSIVGNVFGFKALRALRLEDLRIPPAYAKTFQGPPHGIQVERDKLNKYGRPLLGCTIKPKLGLSAKNYGRAVYECLRGGLDFTKDDENVNSQPFMRWRDRFLFCAEAIYKAQAETGEIKGHYLNATAGTCEEMIKRAVFARELGVPIVMHDYLTGGFTANTSLAHYCRDNGLLLHIHRAMHAVIDRQKNHGIHFRVLAKALRMSGGDHIHSGTVVGKLEGEREITLGFVDLLRDDFIEKDRSRGIYFTQDWVSLPGVLPVASGGIHVWHMPALTEIFGDDSVLQFGGGTLGHPWGNAPGAVANRVALEACVQARNEGRDLAREGNEIIREASKWSPELAAA.

Residue Lys-4 is modified to N6,N6,N6-trimethyllysine. Substrate is bound by residues Asn-113 and Thr-163. Lys-165 functions as the Proton acceptor in the catalytic mechanism. Lys-167 serves as a coordination point for substrate. Residues Lys-191, Asp-193, and Glu-194 each coordinate Mg(2+). N6-carboxylysine is present on Lys-191. The active-site Proton acceptor is His-284. 3 residues coordinate substrate: Arg-285, His-317, and Ser-369.

The protein belongs to the RuBisCO large chain family. Type I subfamily. As to quaternary structure, heterohexadecamer of 8 large chains and 8 small chains; disulfide-linked. The disulfide link is formed within the large subunit homodimers. Mg(2+) is required as a cofactor. Post-translationally, the disulfide bond which can form in the large chain dimeric partners within the hexadecamer appears to be associated with oxidative stress and protein turnover.

It localises to the plastid. It is found in the chloroplast. The catalysed reaction is 2 (2R)-3-phosphoglycerate + 2 H(+) = D-ribulose 1,5-bisphosphate + CO2 + H2O. The enzyme catalyses D-ribulose 1,5-bisphosphate + O2 = 2-phosphoglycolate + (2R)-3-phosphoglycerate + 2 H(+). Its function is as follows. RuBisCO catalyzes two reactions: the carboxylation of D-ribulose 1,5-bisphosphate, the primary event in carbon dioxide fixation, as well as the oxidative fragmentation of the pentose substrate in the photorespiration process. Both reactions occur simultaneously and in competition at the same active site. In Eucryphia lucida (Leatherwood), this protein is Ribulose bisphosphate carboxylase large chain.